Reading from the N-terminus, the 285-residue chain is Putative cuticle collagen 75 (285 aa).

2 triple-helical region regions span residues 87-116 and 133-261; these read GRIG…PGEL and GPKG…PGLD. A compositionally biased stretch (low complexity) spans 207 to 231; it reads PGAPGIPGEEGLSGPTGQPGSPGSI. A disordered region spans residues 207–257; sequence PGAPGIPGEEGLSGPTGQPGSPGSIGAMGYEGAYGDRGEPGPPGPIGRRGG.

This sequence belongs to the cuticular collagen family. Collagen polypeptide chains are complexed within the cuticle by disulfide bonds and other types of covalent cross-links.

Functionally, nematode cuticles are composed largely of collagen-like proteins. The cuticle functions both as an exoskeleton and as a barrier to protect the worm from its environment. This Caenorhabditis elegans protein is Putative cuticle collagen 75 (col-75).